Reading from the N-terminus, the 196-residue chain is Proteasome subunit beta 1 (196 aa).

Positions 1-6 (MEELPA) are cleaved as a propeptide — removed in mature form; by autocatalysis. The active-site Nucleophile is threonine 7.

This sequence belongs to the peptidase T1B family. The 20S proteasome core is composed of 14 alpha and 14 beta subunits that assemble into four stacked heptameric rings, resulting in a barrel-shaped structure. The two inner rings, each composed of seven catalytic beta subunits, are sandwiched by two outer rings, each composed of seven alpha subunits. The catalytic chamber with the active sites is on the inside of the barrel. Has a gated structure, the ends of the cylinder being occluded by the N-termini of the alpha-subunits. Is capped at one or both ends by the proteasome regulatory ATPase, PAN.

It localises to the cytoplasm. It carries out the reaction Cleavage of peptide bonds with very broad specificity.. With respect to regulation, the formation of the proteasomal ATPase PAN-20S proteasome complex, via the docking of the C-termini of PAN into the intersubunit pockets in the alpha-rings, triggers opening of the gate for substrate entry. Interconversion between the open-gate and close-gate conformations leads to a dynamic regulation of the 20S proteasome proteolysis activity. Component of the proteasome core, a large protease complex with broad specificity involved in protein degradation. This Saccharolobus islandicus (strain Y.N.15.51 / Yellowstone #2) (Sulfolobus islandicus) protein is Proteasome subunit beta 1.